We begin with the raw amino-acid sequence, 466 residues long: Ribulose bisphosphate carboxylase large chain (466 aa).

Lysine 5 is subject to N6,N6,N6-trimethyllysine. Residues asparagine 114 and threonine 164 each contribute to the substrate site. The Proton acceptor role is filled by lysine 166. Position 168 (lysine 168) interacts with substrate. Mg(2+) is bound by residues lysine 192, aspartate 194, and glutamate 195. Lysine 192 carries the post-translational modification N6-carboxylysine. Histidine 285 functions as the Proton acceptor in the catalytic mechanism. 3 residues coordinate substrate: arginine 286, histidine 318, and serine 370.

Belongs to the RuBisCO large chain family. Type I subfamily. As to quaternary structure, heterohexadecamer of 8 large chains and 8 small chains; disulfide-linked. The disulfide link is formed within the large subunit homodimers. Mg(2+) serves as cofactor. Post-translationally, the disulfide bond which can form in the large chain dimeric partners within the hexadecamer appears to be associated with oxidative stress and protein turnover.

It is found in the plastid. Its subcellular location is the chloroplast. It catalyses the reaction 2 (2R)-3-phosphoglycerate + 2 H(+) = D-ribulose 1,5-bisphosphate + CO2 + H2O. The catalysed reaction is D-ribulose 1,5-bisphosphate + O2 = 2-phosphoglycolate + (2R)-3-phosphoglycerate + 2 H(+). RuBisCO catalyzes two reactions: the carboxylation of D-ribulose 1,5-bisphosphate, the primary event in carbon dioxide fixation, as well as the oxidative fragmentation of the pentose substrate in the photorespiration process. Both reactions occur simultaneously and in competition at the same active site. The sequence is that of Ribulose bisphosphate carboxylase large chain from Bixa orellana (Lipstick tree).